We begin with the raw amino-acid sequence, 477 residues long: ETS translocation variant 1 (477 aa).

At Ser-94 the chain carries Phosphoserine. A disordered region spans residues Pro-128–Ser-178. Phosphoserine; by RPS6KA1 and RPS6KA5 occurs at positions 191 and 216. Lys-317 is covalently cross-linked (Glycyl lysine isopeptide (Lys-Gly) (interchain with G-Cter in SUMO2)). Residues Leu-335–Val-415 constitute a DNA-binding region (ETS).

The protein belongs to the ETS family. Sumoylated. In terms of processing, phosphorylated at Ser-191 and Ser-216 by RPS6KA1 and RPS6KA5; phosphorylation activates transcriptional activity.

It localises to the nucleus. Its function is as follows. Transcriptional activator that binds to DNA sequences containing the consensus pentanucleotide 5'-CGGA[AT]-3'. Required for olfactory dopaminergic neuron differentiation; may directly activate expression of tyrosine hydroxylase (TH). The protein is ETS translocation variant 1 (ETV1) of Bos taurus (Bovine).